Consider the following 266-residue polypeptide: Hydroxymethylpyrimidine/phosphomethylpyrimidine kinase (266 aa).

Glutamine 44 contributes to the 4-amino-5-hydroxymethyl-2-methylpyrimidine binding site.

It belongs to the ThiD family. In terms of assembly, homodimer.

The enzyme catalyses 4-amino-5-hydroxymethyl-2-methylpyrimidine + ATP = 4-amino-2-methyl-5-(phosphooxymethyl)pyrimidine + ADP + H(+). It carries out the reaction 4-amino-2-methyl-5-(phosphooxymethyl)pyrimidine + ATP = 4-amino-2-methyl-5-(diphosphooxymethyl)pyrimidine + ADP. The protein operates within cofactor biosynthesis; thiamine diphosphate biosynthesis; 4-amino-2-methyl-5-diphosphomethylpyrimidine from 5-amino-1-(5-phospho-D-ribosyl)imidazole: step 2/3. It functions in the pathway cofactor biosynthesis; thiamine diphosphate biosynthesis; 4-amino-2-methyl-5-diphosphomethylpyrimidine from 5-amino-1-(5-phospho-D-ribosyl)imidazole: step 3/3. Functionally, catalyzes the phosphorylation of hydroxymethylpyrimidine phosphate (HMP-P) to HMP-PP, and of HMP to HMP-P. This is Hydroxymethylpyrimidine/phosphomethylpyrimidine kinase (thiD) from Salmonella typhimurium (strain LT2 / SGSC1412 / ATCC 700720).